The primary structure comprises 314 residues: DegV domain-containing protein XAC3508 (314 aa).

Positions 3 to 307 (IGIVVDSACD…KGALAVGFAA (305 aa)) constitute a DegV domain. The hexadecanoate site is built by threonine 63 and serine 96.

Its function is as follows. May bind long-chain fatty acids, such as palmitate, and may play a role in lipid transport or fatty acid metabolism. This Xanthomonas axonopodis pv. citri (strain 306) protein is DegV domain-containing protein XAC3508.